A 283-amino-acid chain; its full sequence is MQIITEPQTIQQACLRWRADGVHTALVPTMGYYHAGHESLMAHARAVSEKVIVSLFVNPAQFGPGEDFAAYPRDLERDAAMAEAQGVDVLFAPKAEDLYKKDHATWVEVPALSQTMCGLSRPTHFRGVCTVVTKLLMLTMPRIAVFGQKDWQQVAVIRRMVRDLNIPVDIVGRPIVREPDGLAMSSRNIYLTAEERLQAPHIHHGLALGRAITQSGERDAETIKTAIRRYWAQNLPGGEEDYLTIVDPVSLEPVDRLTGATLCATAVRVGQARLLDNMMLLGD.

30–37 (MGYYHAGH) serves as a coordination point for ATP. His-37 functions as the Proton donor in the catalytic mechanism. Gln-61 provides a ligand contact to (R)-pantoate. A beta-alanine-binding site is contributed by Gln-61. 147-150 (GQKD) lines the ATP pocket. Gln-153 contributes to the (R)-pantoate binding site. Residues Val-176 and 184–187 (MSSR) each bind ATP.

This sequence belongs to the pantothenate synthetase family. As to quaternary structure, homodimer.

It localises to the cytoplasm. The catalysed reaction is (R)-pantoate + beta-alanine + ATP = (R)-pantothenate + AMP + diphosphate + H(+). It participates in cofactor biosynthesis; (R)-pantothenate biosynthesis; (R)-pantothenate from (R)-pantoate and beta-alanine: step 1/1. Its function is as follows. Catalyzes the condensation of pantoate with beta-alanine in an ATP-dependent reaction via a pantoyl-adenylate intermediate. This is Pantothenate synthetase from Nitratidesulfovibrio vulgaris (strain ATCC 29579 / DSM 644 / CCUG 34227 / NCIMB 8303 / VKM B-1760 / Hildenborough) (Desulfovibrio vulgaris).